The sequence spans 241 residues: MIQLDKLNHCYTHQGNASHNESLSMSFDLIAKKGDIIALIGPSGAGKSSLLAMIAGFLKPDSGELHLNGELITTQAPANRPLSMLFQEHNLFPHLTVFENIGLGIHPGLKLSRQEKEDIVVAAARVGVNKYLDRLPEQLSGGQKQRVALARCLIRQRPLLLLDEPFSALDPALRKEMLELVKHIAREQKTTVLMITHSPDDALKISNKCAFIHNGKIRVFGPTQQVLGEPKDEVLIQYLGF.

Positions 2–239 (IQLDKLNHCY…PKDEVLIQYL (238 aa)) constitute an ABC transporter domain. An ATP-binding site is contributed by 41-48 (GPSGAGKS).

This sequence belongs to the ABC transporter superfamily. Thiamine importer (TC 3.A.1.19.1) family. In terms of assembly, the complex is composed of two ATP-binding proteins (ThiQ), two transmembrane proteins (ThiP) and a solute-binding protein (ThiB).

It is found in the cell inner membrane. It catalyses the reaction thiamine(out) + ATP + H2O = thiamine(in) + ADP + phosphate + H(+). In terms of biological role, part of the ABC transporter complex ThiBPQ involved in thiamine import. Responsible for energy coupling to the transport system. This chain is Thiamine import ATP-binding protein ThiQ, found in Photobacterium profundum (strain SS9).